Consider the following 200-residue polypeptide: Small ribosomal subunit protein eS1 (200 aa).

It belongs to the eukaryotic ribosomal protein eS1 family. As to quaternary structure, part of the 30S ribosomal subunit.

This is Small ribosomal subunit protein eS1 from Thermococcus kodakarensis (strain ATCC BAA-918 / JCM 12380 / KOD1) (Pyrococcus kodakaraensis (strain KOD1)).